The primary structure comprises 271 residues: 5-deoxy-glucuronate isomerase (271 aa).

This sequence belongs to the isomerase IolB family.

The catalysed reaction is 5-deoxy-D-glucuronate = 5-dehydro-2-deoxy-D-gluconate. It participates in polyol metabolism; myo-inositol degradation into acetyl-CoA; acetyl-CoA from myo-inositol: step 4/7. Involved in the isomerization of 5-deoxy-glucuronate (5DG) to 5-dehydro-2-deoxy-D-gluconate (DKG or 2-deoxy-5-keto-D-gluconate). In Bacillus velezensis (strain DSM 23117 / BGSC 10A6 / LMG 26770 / FZB42) (Bacillus amyloliquefaciens subsp. plantarum), this protein is 5-deoxy-glucuronate isomerase.